The chain runs to 72 residues: Small proline-rich protein 2E (72 aa).

The segment covering 1-11 has biased composition (low complexity); it reads MSYQQQQCKQP. A disordered region spans residues 1–20; it reads MSYQQQQCKQPCQPPPVCPT. Tandem repeats lie at residues 21–29, 30–38, and 39–47. The 3 X 9 AA tandem repeats of P-K-C-P-[EQ]-P-C-P-P stretch occupies residues 21-47; it reads PKCPEPCPPPKCPEPCPPPKCPQPCPP. The tract at residues 42–72 is disordered; it reads PQPCPPQQCQQKCPPVTPSPPCQPKCPPKSK. The span at 56 to 72 shows a compositional bias: pro residues; that stretch reads PVTPSPPCQPKCPPKSK.

This sequence belongs to the cornifin (SPRR) family.

The protein localises to the cytoplasm. Cross-linked envelope protein of keratinocytes. It is a keratinocyte protein that first appears in the cell cytosol, but ultimately becomes cross-linked to membrane proteins by transglutaminase. All that results in the formation of an insoluble envelope beneath the plasma membrane. The polypeptide is Small proline-rich protein 2E (SPRR2E) (Homo sapiens (Human)).